Reading from the N-terminus, the 419-residue chain is CDP-diacylglycerol--serine O-phosphatidyltransferase 3 (419 aa).

Residues 1–51 form a disordered region; it reads MPVRRRWYPPSSTAAQPSPDGGDVNTDDADACPSSRQQRPPSLPQHSAPIH. Positions 33–47 are enriched in low complexity; the sequence is PSSRQQRPPSLPQHS. Transmembrane regions (helical) follow at residues 103-123, 142-162, 168-188, 260-280, 287-307, 359-379, and 384-404; these read PHTV…SGVL, WAMI…TILI, VWRL…FLLF, LLLW…RHML, WWDS…WAGM, FIQV…TFFL, and WIPP…LIAI.

The protein belongs to the CDP-alcohol phosphatidyltransferase class-I family.

The protein localises to the endoplasmic reticulum membrane. It carries out the reaction a CDP-1,2-diacyl-sn-glycerol + L-serine = a 1,2-diacyl-sn-glycero-3-phospho-L-serine + CMP + H(+). The protein operates within phospholipid metabolism; phosphatidylethanolamine biosynthesis; phosphatidylethanolamine from CDP-diacylglycerol: step 1/2. In terms of biological role, catalyzes a base-exchange reaction in which the polar head group of phosphatidylethanolamine (PE) or phosphatidylcholine (PC) is replaced by L-serine. The protein is CDP-diacylglycerol--serine O-phosphatidyltransferase 3 (PSS3) of Oryza sativa subsp. japonica (Rice).